A 65-amino-acid polypeptide reads, in one-letter code: 7 kDa A-type inclusion protein (65 aa).

Positions 1–20 (MSNQNIPQLSEYQTSVSQVA) are enriched in polar residues. A disordered region spans residues 1–31 (MSNQNIPQLSEYQTSVSQVAVTPPPKPETPQ).

The polypeptide is 7 kDa A-type inclusion protein (Vaccinia virus (strain Copenhagen) (VACV)).